Consider the following 511-residue polypeptide: S-layer protein B (511 aa).

The signal sequence occupies residues 1–24 (MVKYMNLIVLGMLMFGVFVTLSLG). Residues 358 to 392 (IQRLQSEVSVLESEVDQLKVEIQSLNETLTLQASE) adopt a coiled-coil conformation. The helical transmembrane segment at 487-507 (GGIILGVIALIIAIVAVVLVF) threads the bilayer.

It belongs to the Sulfolobales SlaB family. The mushroom-shaped unit cells of the Sulfolobales' S-layers may consist of three SlaB subunits and six SlaA subunits.

It localises to the secreted. The protein resides in the cell wall. It is found in the S-layer. Its subcellular location is the cell membrane. In terms of biological role, S-layer small protein. May anchor the complex to the cell membrane. This chain is S-layer protein B, found in Acidianus ambivalens (Desulfurolobus ambivalens).